Here is a 368-residue protein sequence, read N- to C-terminus: Phosphate acyltransferase (368 aa).

A disordered region spans residues 334-368 (AAPLGESGRDANGAGQASPSAGQPAEPSAALSSKT).

Belongs to the PlsX family. Homodimer. Probably interacts with PlsY.

It is found in the cytoplasm. The catalysed reaction is a fatty acyl-[ACP] + phosphate = an acyl phosphate + holo-[ACP]. It participates in lipid metabolism; phospholipid metabolism. Functionally, catalyzes the reversible formation of acyl-phosphate (acyl-PO(4)) from acyl-[acyl-carrier-protein] (acyl-ACP). This enzyme utilizes acyl-ACP as fatty acyl donor, but not acyl-CoA. In Burkholderia pseudomallei (strain 1106a), this protein is Phosphate acyltransferase.